Here is a 168-residue protein sequence, read N- to C-terminus: Large ribosomal subunit protein uL10 (168 aa).

It belongs to the universal ribosomal protein uL10 family. As to quaternary structure, part of the ribosomal stalk of the 50S ribosomal subunit. The N-terminus interacts with L11 and the large rRNA to form the base of the stalk. The C-terminus forms an elongated spine to which L12 dimers bind in a sequential fashion forming a multimeric L10(L12)X complex.

Forms part of the ribosomal stalk, playing a central role in the interaction of the ribosome with GTP-bound translation factors. The chain is Large ribosomal subunit protein uL10 from Clostridioides difficile (strain 630) (Peptoclostridium difficile).